A 607-amino-acid polypeptide reads, in one-letter code: Elongation factor 4 (607 aa).

In terms of domain architecture, tr-type G spans Ser-11–Ala-193. Residues Asp-23–Thr-28 and Asn-140–Asp-143 each bind GTP.

The protein belongs to the TRAFAC class translation factor GTPase superfamily. Classic translation factor GTPase family. LepA subfamily.

The protein resides in the cell membrane. It carries out the reaction GTP + H2O = GDP + phosphate + H(+). In terms of biological role, required for accurate and efficient protein synthesis under certain stress conditions. May act as a fidelity factor of the translation reaction, by catalyzing a one-codon backward translocation of tRNAs on improperly translocated ribosomes. Back-translocation proceeds from a post-translocation (POST) complex to a pre-translocation (PRE) complex, thus giving elongation factor G a second chance to translocate the tRNAs correctly. Binds to ribosomes in a GTP-dependent manner. In Shouchella clausii (strain KSM-K16) (Alkalihalobacillus clausii), this protein is Elongation factor 4.